The following is an 861-amino-acid chain: DNA mismatch repair protein MutS (861 aa).

Position 613–620 (613–620 (GPNMGGKS)) interacts with ATP.

It belongs to the DNA mismatch repair MutS family.

In terms of biological role, this protein is involved in the repair of mismatches in DNA. It is possible that it carries out the mismatch recognition step. This protein has a weak ATPase activity. This is DNA mismatch repair protein MutS from Dichelobacter nodosus (strain VCS1703A).